The sequence spans 321 residues: Beta-ketoacyl-[acyl-carrier-protein] synthase III (321 aa).

Residues Cys113 and His248 contribute to the active site. Residues 249–253 (QANAR) are ACP-binding. Asn278 is an active-site residue.

The protein belongs to the thiolase-like superfamily. FabH family. In terms of assembly, homodimer.

It localises to the cytoplasm. The catalysed reaction is malonyl-[ACP] + acetyl-CoA + H(+) = 3-oxobutanoyl-[ACP] + CO2 + CoA. The protein operates within lipid metabolism; fatty acid biosynthesis. In terms of biological role, catalyzes the condensation reaction of fatty acid synthesis by the addition to an acyl acceptor of two carbons from malonyl-ACP. Catalyzes the first condensation reaction which initiates fatty acid synthesis and may therefore play a role in governing the total rate of fatty acid production. Possesses both acetoacetyl-ACP synthase and acetyl transacylase activities. Its substrate specificity determines the biosynthesis of branched-chain and/or straight-chain of fatty acids. The protein is Beta-ketoacyl-[acyl-carrier-protein] synthase III of Erythrobacter litoralis (strain HTCC2594).